The chain runs to 782 residues: Chondroitin proteoglycan 4 (782 aa).

Residues 1-18 form the signal peptide; the sequence is MRLVYSLIFLLFIPFSHP. 6 N-linked (GlcNAc...) asparagine glycosylation sites follow: N76, N208, N462, N468, N474, and N503. Positions 513–726 are disordered; it reads ISEKSTEESS…EDQGSGNYKK (214 aa). 5 stretches are compositionally biased toward low complexity: residues 520–532, 548–566, 573–612, 662–672, and 688–722; these read ESSGSSGEMSGDG, SGSSGDNSGEFNSSGSSGE, SSGSEDQGSGNYKMIESIESSGEFSGSSGEGSGDTASSDT, FGESSGSSGES, and SGSSGDNSGDFNSSGSSGEASGVGESSGSEDQGSG. N559 is a glycosylation site (N-linked (GlcNAc...) asparagine). A glycan (O-linked (Xyl...) (chondroitin sulfate) serine) is linked at S691. N699 is a glycosylation site (N-linked (GlcNAc...) asparagine). 5 O-linked (Xyl...) (chondroitin sulfate) serine glycosylation sites follow: S701, S704, S708, S714, and S721. N743 carries an N-linked (GlcNAc...) asparagine glycan.

This is Chondroitin proteoglycan 4 from Caenorhabditis elegans.